Consider the following 189-residue polypeptide: Sec-independent protein translocase protein TatB (189 aa).

The chain crosses the membrane as a helical span at residues 1-21; sequence MFGVGIFEVLVILIVAVIALG. Positions 152-189 are disordered; the sequence is TQKPQNSIDSINSKESSVDSLHSPSIVESTQSSSSKDS. The span at 153 to 189 shows a compositional bias: polar residues; the sequence is QKPQNSIDSINSKESSVDSLHSPSIVESTQSSSSKDS.

It belongs to the TatB family. In terms of assembly, the Tat system comprises two distinct complexes: a TatABC complex, containing multiple copies of TatA, TatB and TatC subunits, and a separate TatA complex, containing only TatA subunits. Substrates initially bind to the TatABC complex, which probably triggers association of the separate TatA complex to form the active translocon.

It localises to the cell inner membrane. Functionally, part of the twin-arginine translocation (Tat) system that transports large folded proteins containing a characteristic twin-arginine motif in their signal peptide across membranes. Together with TatC, TatB is part of a receptor directly interacting with Tat signal peptides. TatB may form an oligomeric binding site that transiently accommodates folded Tat precursor proteins before their translocation. This chain is Sec-independent protein translocase protein TatB, found in Helicobacter hepaticus (strain ATCC 51449 / 3B1).